Consider the following 705-residue polypeptide: Elongation factor G (705 aa).

The region spanning His-8 to Ala-290 is the tr-type G domain. GTP contacts are provided by residues Ala-17 to Thr-24, Asp-88 to His-92, and Asn-142 to Asp-145.

This sequence belongs to the TRAFAC class translation factor GTPase superfamily. Classic translation factor GTPase family. EF-G/EF-2 subfamily.

It localises to the cytoplasm. Functionally, catalyzes the GTP-dependent ribosomal translocation step during translation elongation. During this step, the ribosome changes from the pre-translocational (PRE) to the post-translocational (POST) state as the newly formed A-site-bound peptidyl-tRNA and P-site-bound deacylated tRNA move to the P and E sites, respectively. Catalyzes the coordinated movement of the two tRNA molecules, the mRNA and conformational changes in the ribosome. This Xylella fastidiosa (strain M23) protein is Elongation factor G.